Consider the following 92-residue polypeptide: MARSLKKGPFVDDHLMNKMEKLVASEQKQVVKTWSRRSTIFPQFIGHTIAVYDGRKHVPVYITEDMVGHKLGEFAPTRTYKGHLADDKKTRR.

It belongs to the universal ribosomal protein uS19 family.

In terms of biological role, protein S19 forms a complex with S13 that binds strongly to the 16S ribosomal RNA. This chain is Small ribosomal subunit protein uS19, found in Bacillus mycoides (strain KBAB4) (Bacillus weihenstephanensis).